A 92-amino-acid chain; its full sequence is Phospholemman (92 aa).

Positions 1–20 (MASLGHILVFCVGLLTMAKA) are cleaved as a signal peptide. Topologically, residues 21 to 35 (ESPKEHDPFTYDYQS) are extracellular. A helical transmembrane segment spans residues 36–56 (LQIGGLVIAGILFILGILIVL). Residues 57–92 (SRRCRCKFNQQQRTGEPDEEEGTFRSSIRRLSTRRR) lie on the Cytoplasmic side of the membrane. C60 carries the S-palmitoyl cysteine lipid modification. C62 carries the post-translational modification S-glutathionyl cysteine; alternate. A lipid anchor (S-palmitoyl cysteine; alternate) is attached at C62. A disordered region spans residues 65–92 (NQQQRTGEPDEEEGTFRSSIRRLSTRRR). T79 is modified (phosphothreonine). S82 carries the post-translational modification Phosphoserine. Residue S83 is modified to Phosphoserine; by PKA and PKC. The segment covering 83–92 (SIRRLSTRRR) has biased composition (basic residues). Position 88 is a phosphoserine; by PKA (S88). T89 is modified (phosphothreonine; by PKC).

It belongs to the FXYD family. In terms of assembly, homotetramer. Monomer. Regulatory subunit of the sodium/potassium-transporting ATPase (NKA) which is composed of a catalytic alpha subunit, an auxiliary non-catalytic beta subunit and an additional regulatory subunit. The monomeric form associates with NKA while the oligomeric form does not. Interacts with the catalytic alpha-1 subunit ATP1A1. Also interacts with the catalytic alpha-2 and alpha-3 subunits ATP1A2 and ATP1A3. Very little interaction with ATP1A1, ATP1A2 or ATP1A3 when phosphorylated at Ser-83. Interacts with the non-catalytic beta-1 subunit ATP1B1. Oxidative stress decreases interaction with ATP1A1 but increases interaction with ATP1B1. Post-translationally, major plasma membrane substrate for cAMP-dependent protein kinase (PKA) and protein kinase C (PKC) in several different tissues. Phosphorylated in response to insulin and adrenergic stimulation. Phosphorylation at Ser-88 stimulates sodium/potassium-transporting ATPase activity while the unphosphorylated form inhibits sodium/potassium-transporting ATPase activity. Phosphorylation increases tetramerization, decreases binding to ATP1A1 and reduces inhibition of ATP1A1 activity. Phosphorylation at Ser-83 leads to greatly reduced interaction with ATP1A1, ATP1A2 and ATP1A3. May be phosphorylated by DMPK. Palmitoylation increases half-life and stability and is enhanced upon phosphorylation at Ser-88 by PKA. In terms of tissue distribution, highest expression in skeletal muscle and heart. Moderate levels in brain, placenta, lung, liver, pancreas, uterus, bladder, prostate, small intestine and colon with mucosal lining. Very low levels in kidney, colon and small intestine without mucosa, prostate without endothelial lining, spleen, and testis.

Its subcellular location is the cell membrane. The protein localises to the sarcolemma. It localises to the apical cell membrane. The protein resides in the membrane. It is found in the caveola. Its subcellular location is the T-tubule. Functionally, associates with and regulates the activity of the sodium/potassium-transporting ATPase (NKA) which transports Na(+) out of the cell and K(+) into the cell. Inhibits NKA activity in its unphosphorylated state and stimulates activity when phosphorylated. Reduces glutathionylation of the NKA beta-1 subunit ATP1B1, thus reversing glutathionylation-mediated inhibition of ATP1B1. Contributes to female sexual development by maintaining the excitability of neurons which secrete gonadotropin-releasing hormone. The polypeptide is Phospholemman (Homo sapiens (Human)).